The primary structure comprises 675 residues: Putative acyl-coenzyme A oxidase 3.2, peroxisomal (675 aa).

The transit peptide at 1–34 (MSENVELRRAHILANHILRSPRPSSNPSLTPEVC) directs the protein to the peroxisome. FAD is bound at residue 442 to 457 (AVGGQGLKTENRVGHL).

This sequence belongs to the acyl-CoA oxidase family. The cofactor is FAD.

The protein resides in the peroxisome. The enzyme catalyses a 2,3-saturated acyl-CoA + O2 = a (2E)-enoyl-CoA + H2O2. In terms of biological role, catalyzes the desaturation of acyl-CoAs to 2-trans-enoyl-CoAs. The protein is Putative acyl-coenzyme A oxidase 3.2, peroxisomal (ACX3.2) of Arabidopsis thaliana (Mouse-ear cress).